We begin with the raw amino-acid sequence, 189 residues long: GTP cyclohydrolase 1 (189 aa).

Zn(2+) is bound by residues Cys-79, His-82, and Cys-151.

Belongs to the GTP cyclohydrolase I family. As to quaternary structure, toroid-shaped homodecamer, composed of two pentamers of five dimers.

The enzyme catalyses GTP + H2O = 7,8-dihydroneopterin 3'-triphosphate + formate + H(+). It participates in cofactor biosynthesis; 7,8-dihydroneopterin triphosphate biosynthesis; 7,8-dihydroneopterin triphosphate from GTP: step 1/1. In Lactiplantibacillus plantarum (strain ATCC BAA-793 / NCIMB 8826 / WCFS1) (Lactobacillus plantarum), this protein is GTP cyclohydrolase 1.